We begin with the raw amino-acid sequence, 196 residues long: MEAVTAIKPLIRVAALSGSLRKTSFHTGLLRAAIDLTKESVPGLQIEYIDISPLPLINTDLEVNGTYPPVVEAFRQKILEADSILFASPEYNFSVSAPLKNALDWASRPPNVWADKPAAIISTGGGFGGGRSQYHLRQIGVFLDLHFINKPEFTLNAFQPPQKFDAEGNLVDEVTKERLKQVLLSLQAFTLRLQGK.

Belongs to the SsuE family. As to quaternary structure, homotetramer. FMN is required as a cofactor.

Its subcellular location is the cell membrane. The catalysed reaction is a quinone + NADH + H(+) = a quinol + NAD(+). The enzyme catalyses a quinone + NADPH + H(+) = a quinol + NADP(+). In terms of biological role, the enzyme apparently serves as a quinone reductase in connection with conjugation reactions of hydroquinones involved in detoxification pathways. This chain is NADPH:quinone oxidoreductase (NQR), found in Arabidopsis thaliana (Mouse-ear cress).